The chain runs to 126 residues: MPTINQLVRKGRASETTKSKSPALQDCPQRRGVCTRVYTTTPKKPNSALRKVAKVRLTNGFEVISYIGGEGHNLQEHSVVLIRGGRVKDLPGVRYHMVRGSLDTQGVKDRRQARSKYGAKRAKAAK.

The tract at residues M1 to D26 is disordered. The residue at position 89 (D89) is a 3-methylthioaspartic acid. The disordered stretch occupies residues L102–K126. Residues A113–K126 show a composition bias toward basic residues.

Belongs to the universal ribosomal protein uS12 family. Part of the 30S ribosomal subunit. Contacts proteins S8 and S17. May interact with IF1 in the 30S initiation complex.

In terms of biological role, with S4 and S5 plays an important role in translational accuracy. Functionally, interacts with and stabilizes bases of the 16S rRNA that are involved in tRNA selection in the A site and with the mRNA backbone. Located at the interface of the 30S and 50S subunits, it traverses the body of the 30S subunit contacting proteins on the other side and probably holding the rRNA structure together. The combined cluster of proteins S8, S12 and S17 appears to hold together the shoulder and platform of the 30S subunit. The protein is Small ribosomal subunit protein uS12 of Burkholderia mallei (strain ATCC 23344).